We begin with the raw amino-acid sequence, 579 residues long: General transcription and DNA repair factor IIH subunit TFB1-3 (579 aa).

BSD domains lie at 107–161 (LTPA…GKDS) and 186–238 (RTNR…YLYS).

It belongs to the TFB1 family. In terms of assembly, component of the 7-subunit TFIIH core complex composed of XPB, XPD, TFB1/GTF2H1, GTF2H2/P44, TFB4/GTF2H3, TFB2/GTF2H4 and TFB5/GTF2H5, which is active in NER. The core complex associates with the 3-subunit CDK-activating kinase (CAK) module composed of CYCH1/cyclin H1, CDKD and MAT1/At4g30820 to form the 10-subunit holoenzyme (holo-TFIIH) active in transcription.

The protein resides in the nucleus. Component of the general transcription and DNA repair factor IIH (TFIIH) core complex, which is involved in general and transcription-coupled nucleotide excision repair (NER) of damaged DNA and, when complexed to CAK, in RNA transcription by RNA polymerase II. In NER, TFIIH acts by opening DNA around the lesion to allow the excision of the damaged oligonucleotide and its replacement by a new DNA fragment. In transcription, TFIIH has an essential role in transcription initiation. When the pre-initiation complex (PIC) has been established, TFIIH is required for promoter opening and promoter escape. Phosphorylation of the C-terminal tail (CTD) of the largest subunit of RNA polymerase II by the kinase module CAK controls the initiation of transcription. The sequence is that of General transcription and DNA repair factor IIH subunit TFB1-3 from Arabidopsis thaliana (Mouse-ear cress).